The following is a 341-amino-acid chain: Glyceraldehyde-3-phosphate dehydrogenase, cytosolic (341 aa).

Residues 14-15 (RI) and aspartate 36 contribute to the NAD(+) site. Residues 153–155 (SCT), threonine 184, 213–214 (TG), and arginine 236 contribute to the D-glyceraldehyde 3-phosphate site. Catalysis depends on cysteine 154, which acts as the Nucleophile. An NAD(+)-binding site is contributed by asparagine 318.

It belongs to the glyceraldehyde-3-phosphate dehydrogenase family. As to quaternary structure, homotetramer.

It is found in the cytoplasm. The enzyme catalyses D-glyceraldehyde 3-phosphate + phosphate + NAD(+) = (2R)-3-phospho-glyceroyl phosphate + NADH + H(+). The protein operates within carbohydrate degradation; glycolysis; pyruvate from D-glyceraldehyde 3-phosphate: step 1/5. Key enzyme in glycolysis that catalyzes the first step of the pathway by converting D-glyceraldehyde 3-phosphate (G3P) into 3-phospho-D-glyceroyl phosphate. Essential for the maintenance of cellular ATP levels and carbohydrate metabolism. This chain is Glyceraldehyde-3-phosphate dehydrogenase, cytosolic (GAPC), found in Chlamydomonas reinhardtii (Chlamydomonas smithii).